A 377-amino-acid chain; its full sequence is Peptide chain release factor 2 (377 aa).

Gln-257 is subject to N5-methylglutamine.

This sequence belongs to the prokaryotic/mitochondrial release factor family. Methylated by PrmC. Methylation increases the termination efficiency of RF2.

The protein localises to the cytoplasm. Its function is as follows. Peptide chain release factor 2 directs the termination of translation in response to the peptide chain termination codons UGA and UAA. In Lactiplantibacillus plantarum (strain ATCC BAA-793 / NCIMB 8826 / WCFS1) (Lactobacillus plantarum), this protein is Peptide chain release factor 2.